The chain runs to 730 residues: MSPWQPLLLALLAFGCSSAAPYQRQPTFVVFPKDLKTSNLTDTQLAEAYLYRYGYTRAAQMMGEKQSLRPALLMLQKQLSLPQTGELDSQTLKAIRTPRCGVPDVGRFQTFKGLKWDHHNITYWIQNYSEDLPRDMIDDAFARAFAVWGEVAPLTFTRVYGPEADIVIQFGVAEHGDGYPFDGKDGLLAHAFPPGAGVQGDAHFDDDELWSLGKGVVIPTYYGNSNGAPCHFPFTFEGRSYSACTTDGRNDGTPWCSTTADYDKDGKFGFCPSERLYTEHGNGEGKPCVFPFIFEGRSYSACTTKGRSDGYRWCATTANYDQDKLYGFCPTRVDATVVGGNSAGELCVFPFVFLGKQYSSCTSDGRRDGRLWCATTSNFDTDKKWGFCPDQGYSLFLVAAHEFGHALGLDHSSVPEALMYPLYSYLEGFPLNKDDIDGIQYLYGRGSKPDPRPPATTTTEPQPTAPPTMCPTIPPTAYPTVGPTVGPTGAPSPGPTSSPSPGPTGAPSPGPTAPPTAGSSEASTESLSPADNPCNVDVFDAIAEIQGALHFFKDGWYWKFLNHRGSPLQGPFLTARTWPALPATLDSAFEDPQTKRVFFFSGRQMWVYTGKTVLGPRSLDKLGLGPEVTHVSGLLPRRLGKALLFSKGRVWRFDLKSQKVDPQSVIRVDKEFSGVPWNSHDIFQYQDKAYFCHGKFFWRVSFQNEVNKVDHEVNQVDDVGYVTYDLLQCP.

An N-terminal signal peptide occupies residues 1–19; it reads MSPWQPLLLALLAFGCSSA. Residues 20–107 constitute a propeptide, activation peptide; the sequence is APYQRQPTFV…PRCGVPDVGR (88 aa). Asn39 is a glycosylation site (N-linked (GlcNAc...) asparagine). A Cysteine switch motif is present at residues 98-105; it reads PRCGVPDV. Zn(2+) is bound at residue Cys100. N-linked (GlcNAc...) asparagine glycans are attached at residues Asn120 and Asn127. 2 residues coordinate Ca(2+): Asp131 and Asp165. Residues His175 and Asp177 each coordinate Zn(2+). 4 residues coordinate Ca(2+): Asp182, Gly183, Asp185, and Leu187. Residue His190 participates in Zn(2+) binding. Ca(2+) contacts are provided by Gly197, Gln199, and Asp201. Zn(2+) is bound at residue His203. 3 residues coordinate Ca(2+): Asp205, Asp206, and Glu208. 3 consecutive Fibronectin type-II domains span residues 225-273, 283-331, and 342-390; these read SNGA…FCPS, GEGK…FCPT, and SAGE…FCPD. 6 disulfide bridges follow: Cys230/Cys256, Cys244/Cys271, Cys288/Cys314, Cys302/Cys329, Cys347/Cys373, and Cys361/Cys388. His401 contacts Zn(2+). Residue Glu402 is part of the active site. Zn(2+)-binding residues include His405 and His411. The tract at residues 442 to 529 is disordered; that stretch reads LYGRGSKPDP…SEASTESLSP (88 aa). Residues 463–477 show a composition bias toward pro residues; it reads PTAPPTMCPTIPPTA. A compositionally biased stretch (low complexity) spans 478 to 489; the sequence is YPTVGPTVGPTG. The segment covering 490–514 has biased composition (pro residues); sequence APSPGPTSSPSPGPTGAPSPGPTAP. Cys534 and Cys729 are oxidised to a cystine. 4 Hemopexin repeats span residues 536-581, 582-626, 628-675, and 676-729; these read VDVF…WPAL, PATL…GLGP, VTHV…FSGV, and PWNS…LLQC.

This sequence belongs to the peptidase M10A family. As to quaternary structure, exists as monomer or homodimer; disulfide-linked. Also exists as heterodimer with LCN2. Macrophages and transformed cell lines produce only the monomeric form. Interacts with ECM1. The cofactor is Zn(2+). Ca(2+) is required as a cofactor. N- and O-glycosylated.

It is found in the secreted. Its subcellular location is the extracellular space. The protein localises to the extracellular matrix. It carries out the reaction Cleavage of gelatin types I and V and collagen types IV and V.. Inhibited by histatin-3 1/24 (histatin-5). Inhibited by ECM1. Its function is as follows. Matrix metalloproteinase that plays an essential role in local proteolysis of the extracellular matrix and in leukocyte migration. Could play a role in bone osteoclastic resorption. Cleaves KiSS1 at a Gly-|-Leu bond. Cleaves NINJ1 to generate the Secreted ninjurin-1 form. Cleaves type IV and type V collagen into large C-terminal three quarter fragments and shorter N-terminal one quarter fragments. Degrades fibronectin but not laminin or Pz-peptide. In Mus musculus (Mouse), this protein is Matrix metalloproteinase-9 (Mmp9).